The sequence spans 908 residues: Protein translocase subunit SecA (908 aa).

ATP-binding positions include glutamine 87, 105-109, and aspartate 512; that span reads GEGKT. Residues 865–908 form a disordered region; the sequence is GGDDGSDEMMAHTPMIRDGDKVGRNDPCPCGSGRKYKQCHGKLS. Basic and acidic residues predominate over residues 879–888; it reads MIRDGDKVGR. Zn(2+)-binding residues include cysteine 892, cysteine 894, cysteine 903, and histidine 904. A compositionally biased stretch (basic residues) spans 898–908; sequence RKYKQCHGKLS.

The protein belongs to the SecA family. In terms of assembly, monomer and homodimer. Part of the essential Sec protein translocation apparatus which comprises SecA, SecYEG and auxiliary proteins SecDF-YajC and YidC. Zn(2+) serves as cofactor.

The protein localises to the cell inner membrane. It is found in the cytoplasm. The catalysed reaction is ATP + H2O + cellular proteinSide 1 = ADP + phosphate + cellular proteinSide 2.. Part of the Sec protein translocase complex. Interacts with the SecYEG preprotein conducting channel. Has a central role in coupling the hydrolysis of ATP to the transfer of proteins into and across the cell membrane, serving both as a receptor for the preprotein-SecB complex and as an ATP-driven molecular motor driving the stepwise translocation of polypeptide chains across the membrane. The polypeptide is Protein translocase subunit SecA (Shewanella sp. (strain MR-7)).